Here is a 1648-residue protein sequence, read N- to C-terminus: Vitellogenin-6 (1648 aa).

The N-terminal stretch at 1–15 (MRFAVLLALFGLALA) is a signal peptide. The region spanning 26–691 (YRSGREYRYQ…SNDSVLPKEI (666 aa)) is the Vitellogenin domain. 2 disulfide bridges follow: Cys178-Cys203 and Cys219-Cys222. 3 N-linked (GlcNAc...) asparagine glycosylation sites follow: Asn237, Asn371, and Asn683. Positions 1070 to 1092 (EKNVEYEQEDKEPKSSQLQSQIR) are disordered. Asn1295 carries N-linked (GlcNAc...) asparagine glycosylation. The region spanning 1346–1514 (PECIVKSKEI…SYLSKDDECE (169 aa)) is the VWFD domain. Disulfide bonds link Cys1348–Cys1477 and Cys1370–Cys1513. N-linked (GlcNAc...) asparagine glycans are attached at residues Asn1584 and Asn1617.

The precursor protein is probably further processed into vitellin polypeptides VT2 and VT3. In terms of processing, both VT2 and VT3 polypeptides seem to be N-glycosylated.

The protein localises to the secreted. Precursor of the egg-yolk proteins that are sources of nutrients during embryonic development. This Oscheius tipulae protein is Vitellogenin-6 (vit-6).